Reading from the N-terminus, the 154-residue chain is Myoglobin (154 aa).

The Globin domain maps to 2–148 (GLSDGEWQSV…FRNDIAAKYK (147 aa)). A Phosphoserine modification is found at serine 4. Residue histidine 65 coordinates nitrite. Position 65 (histidine 65) interacts with O2. Threonine 68 is modified (phosphothreonine). Histidine 94 is a heme b binding site.

The protein belongs to the globin family. Monomeric.

The protein resides in the cytoplasm. The protein localises to the sarcoplasm. The catalysed reaction is Fe(III)-heme b-[protein] + nitric oxide + H2O = Fe(II)-heme b-[protein] + nitrite + 2 H(+). It catalyses the reaction H2O2 + AH2 = A + 2 H2O. Functionally, monomeric heme protein which primary function is to store oxygen and facilitate its diffusion within muscle tissues. Reversibly binds oxygen through a pentacoordinated heme iron and enables its timely and efficient release as needed during periods of heightened demand. Depending on the oxidative conditions of tissues and cells, and in addition to its ability to bind oxygen, it also has a nitrite reductase activity whereby it regulates the production of bioactive nitric oxide. Under stress conditions, like hypoxia and anoxia, it also protects cells against reactive oxygen species thanks to its pseudoperoxidase activity. This chain is Myoglobin (MB), found in Nycticebus coucang (Slow loris).